Consider the following 211-residue polypeptide: Uridine kinase (211 aa).

Residue 12-19 (GGSGSGKT) participates in ATP binding.

This sequence belongs to the uridine kinase family.

The protein localises to the cytoplasm. The catalysed reaction is uridine + ATP = UMP + ADP + H(+). The enzyme catalyses cytidine + ATP = CMP + ADP + H(+). The protein operates within pyrimidine metabolism; CTP biosynthesis via salvage pathway; CTP from cytidine: step 1/3. Its pathway is pyrimidine metabolism; UMP biosynthesis via salvage pathway; UMP from uridine: step 1/1. This Geobacillus sp. (strain WCH70) protein is Uridine kinase.